The primary structure comprises 84 residues: Sec-independent protein translocase protein TatA (84 aa).

Residues 1-21 traverse the membrane as a helical segment; it reads MGGFSIWHWLIVLLIVVMVFG. Residues 40–84 form a disordered region; that stretch reads KDGMKDGGQSPADEKPVVPASQVTNAQAADKAERNTIDVEARQKS. Positions 69–84 are enriched in basic and acidic residues; sequence DKAERNTIDVEARQKS.

Belongs to the TatA/E family. In terms of assembly, the Tat system comprises two distinct complexes: a TatABC complex, containing multiple copies of TatA, TatB and TatC subunits, and a separate TatA complex, containing only TatA subunits. Substrates initially bind to the TatABC complex, which probably triggers association of the separate TatA complex to form the active translocon.

It is found in the cell inner membrane. Its function is as follows. Part of the twin-arginine translocation (Tat) system that transports large folded proteins containing a characteristic twin-arginine motif in their signal peptide across membranes. TatA could form the protein-conducting channel of the Tat system. This is Sec-independent protein translocase protein TatA from Polaromonas naphthalenivorans (strain CJ2).